A 473-amino-acid polypeptide reads, in one-letter code: ATP synthase subunit beta (473 aa).

Gly-153–Thr-160 provides a ligand contact to ATP.

The protein belongs to the ATPase alpha/beta chains family. In terms of assembly, F-type ATPases have 2 components, CF(1) - the catalytic core - and CF(0) - the membrane proton channel. CF(1) has five subunits: alpha(3), beta(3), gamma(1), delta(1), epsilon(1). CF(0) has three main subunits: a(1), b(2) and c(9-12). The alpha and beta chains form an alternating ring which encloses part of the gamma chain. CF(1) is attached to CF(0) by a central stalk formed by the gamma and epsilon chains, while a peripheral stalk is formed by the delta and b chains.

It is found in the cell inner membrane. The enzyme catalyses ATP + H2O + 4 H(+)(in) = ADP + phosphate + 5 H(+)(out). Functionally, produces ATP from ADP in the presence of a proton gradient across the membrane. The catalytic sites are hosted primarily by the beta subunits. The polypeptide is ATP synthase subunit beta (Rickettsia bellii (strain RML369-C)).